The sequence spans 349 residues: Small ribosomal subunit biogenesis GTPase RsgA (349 aa).

Basic residues predominate over residues 1–11 (MSKKKLSKGQQ). The interval 1-35 (MSKKKLSKGQQRRVSANHQRRLKHADSKVEWDDSQ) is disordered. The 162-residue stretch at 111–272 (YDGLKPIAAN…VIDSPGVREF (162 aa)) folds into the CP-type G domain. GTP contacts are provided by residues 158–161 (NKID) and 212–220 (GQSGVGKSS). Zn(2+) contacts are provided by Cys-296, Cys-301, His-303, and Cys-309.

It belongs to the TRAFAC class YlqF/YawG GTPase family. RsgA subfamily. As to quaternary structure, monomer. Associates with 30S ribosomal subunit, binds 16S rRNA. Zn(2+) is required as a cofactor.

The protein resides in the cytoplasm. Its function is as follows. One of several proteins that assist in the late maturation steps of the functional core of the 30S ribosomal subunit. Helps release RbfA from mature subunits. May play a role in the assembly of ribosomal proteins into the subunit. Circularly permuted GTPase that catalyzes slow GTP hydrolysis, GTPase activity is stimulated by the 30S ribosomal subunit. The chain is Small ribosomal subunit biogenesis GTPase RsgA from Dickeya dadantii (strain 3937) (Erwinia chrysanthemi (strain 3937)).